A 339-amino-acid polypeptide reads, in one-letter code: Phosphatidylglycerol--prolipoprotein diacylglyceryl transferase (339 aa).

3 helical membrane-spanning segments follow: residues 43 to 63 (FTIA…YWLG), 81 to 101 (ILWM…LTSW), and 121 to 141 (NGGI…IYFA). A 1,2-diacyl-sn-glycero-3-phospho-(1'-sn-glycerol) is bound at residue Arg-167. Helical transmembrane passes span 231–251 (FTQL…YFWL) and 300–320 (LWTD…WMLW).

The protein belongs to the Lgt family.

Its subcellular location is the cell membrane. It carries out the reaction L-cysteinyl-[prolipoprotein] + a 1,2-diacyl-sn-glycero-3-phospho-(1'-sn-glycerol) = an S-1,2-diacyl-sn-glyceryl-L-cysteinyl-[prolipoprotein] + sn-glycerol 1-phosphate + H(+). The protein operates within protein modification; lipoprotein biosynthesis (diacylglyceryl transfer). In terms of biological role, catalyzes the transfer of the diacylglyceryl group from phosphatidylglycerol to the sulfhydryl group of the N-terminal cysteine of a prolipoprotein, the first step in the formation of mature lipoproteins. The sequence is that of Phosphatidylglycerol--prolipoprotein diacylglyceryl transferase from Deinococcus radiodurans (strain ATCC 13939 / DSM 20539 / JCM 16871 / CCUG 27074 / LMG 4051 / NBRC 15346 / NCIMB 9279 / VKM B-1422 / R1).